A 95-amino-acid chain; its full sequence is DNA-directed RNA polymerase subunit Rpo11 (95 aa).

It belongs to the archaeal Rpo11/eukaryotic RPB11/RPC19 RNA polymerase subunit family. In terms of assembly, part of the RNA polymerase complex.

Its subcellular location is the cytoplasm. The catalysed reaction is RNA(n) + a ribonucleoside 5'-triphosphate = RNA(n+1) + diphosphate. Functionally, DNA-dependent RNA polymerase (RNAP) catalyzes the transcription of DNA into RNA using the four ribonucleoside triphosphates as substrates. This Pyrococcus abyssi (strain GE5 / Orsay) protein is DNA-directed RNA polymerase subunit Rpo11.